The following is a 147-amino-acid chain: Protein SPMIP3 (147 aa).

The polypeptide is Protein SPMIP3 (Homo sapiens (Human)).